Here is a 223-residue protein sequence, read N- to C-terminus: Neurotrophic factor BDNF precursor form (223 aa).

The signal sequence occupies residues 1–5 (SCMKA). A propeptide spanning residues 6–114 (APMKEVSIRG…AANMSMRVRR (109 aa)) is cleaved from the precursor. A glycan (N-linked (GlcNAc...) asparagine) is linked at Asn107. Cystine bridges form between Cys127–Cys194 and Cys172–Cys223.

The protein belongs to the NGF-beta family.

It is found in the secreted. Promotes the survival of neuronal populations that are all located either in the central nervous system or directly connected to it. The chain is Neurotrophic factor BDNF precursor form (BDNF) from Charina bottae (Northern rubber boa).